The following is a 309-amino-acid chain: UDP-N-acetylenolpyruvoylglucosamine reductase (309 aa).

Residues R34–G198 enclose the FAD-binding PCMH-type domain. R178 is a catalytic residue. S227 functions as the Proton donor in the catalytic mechanism. Residue E297 is part of the active site.

It belongs to the MurB family. It depends on FAD as a cofactor.

The protein resides in the cytoplasm. It catalyses the reaction UDP-N-acetyl-alpha-D-muramate + NADP(+) = UDP-N-acetyl-3-O-(1-carboxyvinyl)-alpha-D-glucosamine + NADPH + H(+). Its pathway is cell wall biogenesis; peptidoglycan biosynthesis. Functionally, cell wall formation. This Acidiphilium cryptum (strain JF-5) protein is UDP-N-acetylenolpyruvoylglucosamine reductase.